A 165-amino-acid chain; its full sequence is Large ribosomal subunit protein uL5 (165 aa).

It belongs to the universal ribosomal protein uL5 family. Part of the 50S ribosomal subunit; contacts the 5S rRNA and probably tRNA. Forms a bridge to the 30S subunit in the 70S ribosome.

Functionally, this is one of the proteins that bind and probably mediate the attachment of the 5S RNA into the large ribosomal subunit, where it forms part of the central protuberance. In the 70S ribosome it contacts protein S13 of the 30S subunit (bridge B1b), connecting the 2 subunits; this bridge is implicated in subunit movement. May contact the P site tRNA; the 5S rRNA and some of its associated proteins might help stabilize positioning of ribosome-bound tRNAs. This is Large ribosomal subunit protein uL5 from Methanosarcina acetivorans (strain ATCC 35395 / DSM 2834 / JCM 12185 / C2A).